The chain runs to 623 residues: tRNA uridine 5-carboxymethylaminomethyl modification enzyme MnmG (623 aa).

An FAD-binding site is contributed by 12–17 (GAGHAG). An NAD(+)-binding site is contributed by 272–286 (GPRYCPSIEDKINRF).

The protein belongs to the MnmG family. In terms of assembly, homodimer. Heterotetramer of two MnmE and two MnmG subunits. The cofactor is FAD.

The protein resides in the cytoplasm. Its function is as follows. NAD-binding protein involved in the addition of a carboxymethylaminomethyl (cmnm) group at the wobble position (U34) of certain tRNAs, forming tRNA-cmnm(5)s(2)U34. In Flavobacterium johnsoniae (strain ATCC 17061 / DSM 2064 / JCM 8514 / BCRC 14874 / CCUG 350202 / NBRC 14942 / NCIMB 11054 / UW101) (Cytophaga johnsonae), this protein is tRNA uridine 5-carboxymethylaminomethyl modification enzyme MnmG.